A 703-amino-acid polypeptide reads, in one-letter code: Solute carrier family 28 member 3 (703 aa).

The segment covering 1-19 has biased composition (basic and acidic residues); that stretch reads MSRADPGKNSEPSESKMSL. Positions 1-93 are disordered; that stretch reads MSRADPGKNS…DPEDDSEDEH (93 aa). Residues 1–117 are Cytoplasmic-facing; sequence MSRADPGKNS…FCRKHRVVLR (117 aa). Residues 44-61 are compositionally biased toward polar residues; that stretch reads QNTPGNSTVRNRVVQSGE. The segment covering 63 to 72 has biased composition (basic and acidic residues); it reads GHAKQDDRQI. The chain crosses the membrane as a helical span at residues 118–138; sequence STIWAVLLTGFLALVIAACAI. The Extracellular segment spans residues 139 to 143; the sequence is NFHRA. The chain crosses the membrane as a helical span at residues 144–164; the sequence is LPLFVITLVTIFFVIWDHLMA. At 165–188 the chain is on the cytoplasmic side; sequence KYEQRIDDFLSPGRRLLDRHWFWL. A helical membrane pass occupies residues 189-209; it reads KWVVWSSLILAIILWLSLDTA. Over 210–212 the chain is Extracellular; the sequence is KLG. Residues 213–234 traverse the membrane as a helical segment; it reads QQNLVSFGGLIMYLILLFLFSK. Residues 235 to 242 lie on the Cytoplasmic side of the membrane; sequence HPTRVYWR. The chain crosses the membrane as a helical span at residues 243–262; the sequence is PVFWGIGLQFLLGLLILRTR. The Extracellular portion of the chain corresponds to 263 to 299; sequence PGFVAFDWMGRQVQTFLGYTDTGARFVFGEKYTDHFF. Residues 300 to 320 form a helical membrane-spanning segment; it reads AFKILPIVVFFSTVMSMLYYL. The Cytoplasmic segment spans residues 321–344; it reads GLMQWIIRKVGWLMLVTMGSSPIE. The helical intramembrane region spans 345–363; sequence SVVAAGNIFIGQTESPLLV. The Cytoplasmic segment spans residues 364-376; the sequence is QPYLPHVTKSELH. Residues 377-399 traverse the membrane as a helical segment; it reads TIMTAGFATIAGSVLGAYISFGV. At 400–401 the chain is on the extracellular side; the sequence is SS. The helical transmembrane segment at 402-423 threads the bilayer; sequence THLLTASVMSAPAALAVAKLFW. The Cytoplasmic portion of the chain corresponds to 424-458; it reads PETEKPKITLKSAMKMENGDSRNLLEAASQGASSS. The helical transmembrane segment at 459–484 threads the bilayer; it reads IPLVANIAANLIAFLALLSFVNSALS. Residues 485-522 are Extracellular-facing; that stretch reads WFGSMFNYPELSFELICSYIFMPFSFMMGVDWQDSFMV. Positions 523–542 form an intramembrane region, helical; that stretch reads AKLIGYKTFFNEFVAYDHLS. At 543-581 the chain is on the extracellular side; it reads KLINLRKAAGPKFVNGVQQYMSIRSETIATYALCGFANF. The helical transmembrane segment at 582 to 592 threads the bilayer; that stretch reads GSLGIVIGGLT. Residues 593–605 are Cytoplasmic-facing; the sequence is SIAPSRKRDIASG. The helical transmembrane segment at 606–628 threads the bilayer; that stretch reads AMRALIAGTIACFMTACIAGILS. The Extracellular portion of the chain corresponds to 629-703; the sequence is DTPVDINCHH…LNCNWIPNKL (75 aa).

Belongs to the concentrative nucleoside transporter (CNT) (TC 2.A.41) family. In terms of assembly, homotrimer.

It is found in the cell membrane. It carries out the reaction thymidine(out) + 2 Na(+)(out) = thymidine(in) + 2 Na(+)(in). It catalyses the reaction cytidine(out) + 2 Na(+)(out) = cytidine(in) + 2 Na(+)(in). The enzyme catalyses uridine(out) + 2 Na(+)(out) = uridine(in) + 2 Na(+)(in). The catalysed reaction is adenosine(out) + 2 Na(+)(out) = adenosine(in) + 2 Na(+)(in). It carries out the reaction guanosine(out) + 2 Na(+)(out) = guanosine(in) + 2 Na(+)(in). It catalyses the reaction inosine(out) + 2 Na(+)(out) = inosine(in) + 2 Na(+)(in). Functionally, sodium-dependent, pyrimidine- and purine-selective. Involved in the homeostasis of endogenous nucleosides. Exhibits the transport characteristics of the nucleoside transport system cib or N3 subtype (N3/cib) (with marked transport of both thymidine and inosine). Employs a 2:1 sodium/nucleoside ratio. Also able to transport gemcitabine, 3'-azido-3'-deoxythymidine (AZT), ribavirin and 3-deazauridine. This is Solute carrier family 28 member 3 (Slc28a3) from Mus musculus (Mouse).